The chain runs to 228 residues: Large ribosomal subunit protein uL1 (228 aa).

This sequence belongs to the universal ribosomal protein uL1 family. As to quaternary structure, part of the 50S ribosomal subunit.

In terms of biological role, binds directly to 23S rRNA. The L1 stalk is quite mobile in the ribosome, and is involved in E site tRNA release. Functionally, protein L1 is also a translational repressor protein, it controls the translation of the L11 operon by binding to its mRNA. This Clavibacter sepedonicus (Clavibacter michiganensis subsp. sepedonicus) protein is Large ribosomal subunit protein uL1.